The primary structure comprises 250 residues: 1-(5-phosphoribosyl)-5-[(5-phosphoribosylamino)methylideneamino] imidazole-4-carboxamide isomerase (250 aa).

Catalysis depends on Asp8, which acts as the Proton acceptor. The active-site Proton donor is the Asp129.

Belongs to the HisA/HisF family.

Its subcellular location is the cytoplasm. The catalysed reaction is 1-(5-phospho-beta-D-ribosyl)-5-[(5-phospho-beta-D-ribosylamino)methylideneamino]imidazole-4-carboxamide = 5-[(5-phospho-1-deoxy-D-ribulos-1-ylimino)methylamino]-1-(5-phospho-beta-D-ribosyl)imidazole-4-carboxamide. It participates in amino-acid biosynthesis; L-histidine biosynthesis; L-histidine from 5-phospho-alpha-D-ribose 1-diphosphate: step 4/9. This is 1-(5-phosphoribosyl)-5-[(5-phosphoribosylamino)methylideneamino] imidazole-4-carboxamide isomerase from Desulfatibacillum aliphaticivorans.